The primary structure comprises 59 residues: Large ribosomal subunit protein bL33 (59 aa).

This sequence belongs to the bacterial ribosomal protein bL33 family.

In Borrelia recurrentis (strain A1), this protein is Large ribosomal subunit protein bL33.